The primary structure comprises 208 residues: Protein-L-isoaspartate O-methyltransferase (208 aa).

The active site involves Ser59.

The protein belongs to the methyltransferase superfamily. L-isoaspartyl/D-aspartyl protein methyltransferase family. In terms of assembly, monomer.

The protein localises to the cytoplasm. The enzyme catalyses [protein]-L-isoaspartate + S-adenosyl-L-methionine = [protein]-L-isoaspartate alpha-methyl ester + S-adenosyl-L-homocysteine. Catalyzes the methyl esterification of L-isoaspartyl residues in peptides and proteins that result from spontaneous decomposition of normal L-aspartyl and L-asparaginyl residues. It plays a role in the repair and/or degradation of damaged proteins. The polypeptide is Protein-L-isoaspartate O-methyltransferase (pcm) (Shigella flexneri).